The primary structure comprises 79 residues: Small ribosomal subunit protein eS17 (79 aa).

Belongs to the eukaryotic ribosomal protein eS17 family.

This chain is Small ribosomal subunit protein eS17, found in Saccharolobus islandicus (strain Y.N.15.51 / Yellowstone #2) (Sulfolobus islandicus).